A 90-amino-acid chain; its full sequence is PIK3R3 upstream open reading frame protein (90 aa).

Positions methionine 1–aspartate 63 are disordered. Positions proline 27–proline 46 are enriched in basic residues. Residues threonine 50 to aspartate 63 are compositionally biased toward polar residues.

The chain is PIK3R3 upstream open reading frame protein from Mus musculus (Mouse).